We begin with the raw amino-acid sequence, 409 residues long: Tryptophan synthase beta chain (409 aa).

Position 104 is an N6-(pyridoxal phosphate)lysine (K104).

Belongs to the TrpB family. As to quaternary structure, tetramer of two alpha and two beta chains. Requires pyridoxal 5'-phosphate as cofactor.

It carries out the reaction (1S,2R)-1-C-(indol-3-yl)glycerol 3-phosphate + L-serine = D-glyceraldehyde 3-phosphate + L-tryptophan + H2O. The protein operates within amino-acid biosynthesis; L-tryptophan biosynthesis; L-tryptophan from chorismate: step 5/5. The beta subunit is responsible for the synthesis of L-tryptophan from indole and L-serine. The chain is Tryptophan synthase beta chain from Trichodesmium erythraeum (strain IMS101).